Here is a 249-residue protein sequence, read N- to C-terminus: 5'-nucleotidase SurE (249 aa).

Positions 8, 9, 39, and 91 each coordinate a divalent metal cation.

It belongs to the SurE nucleotidase family. Requires a divalent metal cation as cofactor.

The protein localises to the cytoplasm. It catalyses the reaction a ribonucleoside 5'-phosphate + H2O = a ribonucleoside + phosphate. In terms of biological role, nucleotidase that shows phosphatase activity on nucleoside 5'-monophosphates. The protein is 5'-nucleotidase SurE of Haemophilus influenzae (strain ATCC 51907 / DSM 11121 / KW20 / Rd).